The sequence spans 424 residues: UPF0229 protein ECA2349 (424 aa).

Residues 53–111 (SIPNADINEPMFHQGRGGHRHRVHPGNDHFVQNDKIERPQGGGGSGSGQGDASKDGEGD) form a disordered region. Positions 77–90 (PGNDHFVQNDKIER) are enriched in basic and acidic residues. The segment covering 92-101 (QGGGGSGSGQ) has biased composition (gly residues).

The protein belongs to the UPF0229 family.

In Pectobacterium atrosepticum (strain SCRI 1043 / ATCC BAA-672) (Erwinia carotovora subsp. atroseptica), this protein is UPF0229 protein ECA2349.